Reading from the N-terminus, the 138-residue chain is Ribosome-binding factor A (138 aa).

The disordered stretch occupies residues 119–138 (RSPEVQRDLGPSNEKDDEQN).

It belongs to the RbfA family. In terms of assembly, monomer. Binds 30S ribosomal subunits, but not 50S ribosomal subunits or 70S ribosomes.

It localises to the cytoplasm. Its function is as follows. One of several proteins that assist in the late maturation steps of the functional core of the 30S ribosomal subunit. Associates with free 30S ribosomal subunits (but not with 30S subunits that are part of 70S ribosomes or polysomes). Required for efficient processing of 16S rRNA. May interact with the 5'-terminal helix region of 16S rRNA. In Agrobacterium fabrum (strain C58 / ATCC 33970) (Agrobacterium tumefaciens (strain C58)), this protein is Ribosome-binding factor A.